The sequence spans 396 residues: 1-deoxy-D-xylulose 5-phosphate reductoisomerase (396 aa).

Threonine 15, glycine 16, serine 17, isoleucine 18, glycine 41, and asparagine 130 together coordinate NADPH. Position 131 (lysine 131) interacts with 1-deoxy-D-xylulose 5-phosphate. Residue glutamate 132 participates in NADPH binding. Aspartate 155 serves as a coordination point for Mn(2+). 4 residues coordinate 1-deoxy-D-xylulose 5-phosphate: serine 156, glutamate 157, serine 181, and histidine 204. Mn(2+) is bound at residue glutamate 157. Glycine 210 contacts NADPH. Serine 217, asparagine 222, lysine 223, and glutamate 226 together coordinate 1-deoxy-D-xylulose 5-phosphate. Glutamate 226 contacts Mn(2+).

This sequence belongs to the DXR family. Requires Mg(2+) as cofactor. Mn(2+) serves as cofactor.

It catalyses the reaction 2-C-methyl-D-erythritol 4-phosphate + NADP(+) = 1-deoxy-D-xylulose 5-phosphate + NADPH + H(+). Its pathway is isoprenoid biosynthesis; isopentenyl diphosphate biosynthesis via DXP pathway; isopentenyl diphosphate from 1-deoxy-D-xylulose 5-phosphate: step 1/6. Functionally, catalyzes the NADPH-dependent rearrangement and reduction of 1-deoxy-D-xylulose-5-phosphate (DXP) to 2-C-methyl-D-erythritol 4-phosphate (MEP). This Bifidobacterium longum (strain DJO10A) protein is 1-deoxy-D-xylulose 5-phosphate reductoisomerase.